Here is a 559-residue protein sequence, read N- to C-terminus: Cocaine esterase (559 aa).

Positions 1 to 26 (MRLHRLRARLSAVACGLLLLLVRGQG) are cleaved as a signal peptide. Pyrrolidone carboxylic acid is present on Q27. The cysteines at positions 95 and 123 are disulfide-linked. An N-linked (GlcNAc...) asparagine glycan is attached at N111. The Acyl-ester intermediate role is filled by S228. A glycan (N-linked (GlcNAc...) asparagine) is linked at N276. A disulfide bond links C280 and C291. Catalysis depends on charge relay system residues E345 and H457. The short motif at 556–559 (HTEL) is the Prevents secretion from ER element.

It belongs to the type-B carboxylesterase/lipase family. As to quaternary structure, monomer. Glycosylated. Preferentially expressed in intestine with moderate expression in liver. Within the intestine, highest expression is found in small intestine with lower expression in colon and rectum.

The protein localises to the endoplasmic reticulum lumen. The enzyme catalyses cocaine + H2O = ecgonine methyl ester + benzoate + H(+). It carries out the reaction a carboxylic ester + H2O = an alcohol + a carboxylate + H(+). It catalyses the reaction 4-methylumbelliferyl acetate + H2O = 4-methylumbelliferone + acetate + H(+). The catalysed reaction is 2-(5Z,8Z,11Z,14Z-eicosatetraenoyl)-glycerol + H2O = glycerol + (5Z,8Z,11Z,14Z)-eicosatetraenoate + H(+). The enzyme catalyses prostaglandin E2 1-glyceryl ester + H2O = prostaglandin E2 + glycerol + H(+). It carries out the reaction prostaglandin F2alpha 1-glyceryl ester + H2O = prostaglandin F2alpha + glycerol + H(+). In terms of biological role, involved in the detoxification of xenobiotics and in the activation of ester and amide prodrugs. Shows high catalytic efficiency for hydrolysis of cocaine, 4-methylumbelliferyl acetate, heroin and 6-monoacetylmorphine. Hydrolyzes aspirin, substrates with large alcohol group and small acyl group and endogenous lipids such as triacylglycerol. Converts monoacylglycerides to free fatty acids and glycerol. Hydrolyzes of 2-arachidonoylglycerol and prostaglandins. This is Cocaine esterase from Homo sapiens (Human).